The primary structure comprises 205 residues: Small ribosomal subunit protein mS26 (205 aa).

The transit peptide at 1 to 26 (MLRALSTLGARPLGRPPAQFLLLARG) directs the protein to the mitochondrion.

The protein belongs to the mitochondrion-specific ribosomal protein mS26 family. Component of the mitochondrial ribosome small subunit (28S) which comprises a 12S rRNA and about 30 distinct proteins.

The protein resides in the mitochondrion. This is Small ribosomal subunit protein mS26 (MRPS26) from Bos taurus (Bovine).